Reading from the N-terminus, the 324-residue chain is Probable non-intrinsic ABC protein 5 (324 aa).

The 110-residue stretch at 2–111 (DRERYDKVIE…ADLTLVMKDG (110 aa)) folds into the ABC transporter domain. 2 consecutive transmembrane segments (helical) span residues 212 to 232 (YITL…QILF) and 259 to 279 (LSTL…CILV). The ABC transmembrane type-1 domain occupies 222–324 (VPFILLGQIL…TCSKTCIYSS (103 aa)).

It belongs to the ABC transporter superfamily.

Its subcellular location is the membrane. The chain is Probable non-intrinsic ABC protein 5 (NAP5) from Arabidopsis thaliana (Mouse-ear cress).